The primary structure comprises 99 residues: Aspartyl/glutamyl-tRNA(Asn/Gln) amidotransferase subunit C (99 aa).

It belongs to the GatC family. Heterotrimer of A, B and C subunits.

The enzyme catalyses L-glutamyl-tRNA(Gln) + L-glutamine + ATP + H2O = L-glutaminyl-tRNA(Gln) + L-glutamate + ADP + phosphate + H(+). The catalysed reaction is L-aspartyl-tRNA(Asn) + L-glutamine + ATP + H2O = L-asparaginyl-tRNA(Asn) + L-glutamate + ADP + phosphate + 2 H(+). In terms of biological role, allows the formation of correctly charged Asn-tRNA(Asn) or Gln-tRNA(Gln) through the transamidation of misacylated Asp-tRNA(Asn) or Glu-tRNA(Gln) in organisms which lack either or both of asparaginyl-tRNA or glutaminyl-tRNA synthetases. The reaction takes place in the presence of glutamine and ATP through an activated phospho-Asp-tRNA(Asn) or phospho-Glu-tRNA(Gln). In Burkholderia lata (strain ATCC 17760 / DSM 23089 / LMG 22485 / NCIMB 9086 / R18194 / 383), this protein is Aspartyl/glutamyl-tRNA(Asn/Gln) amidotransferase subunit C.